The sequence spans 167 residues: CASP-like protein 3 (167 aa).

Residues 1–2 lie on the Cytoplasmic side of the membrane; it reads MK. Residues 3 to 23 form a helical membrane-spanning segment; that stretch reads IIAIAPRIGAAVLSLVAFSVM. Residues 24–48 lie on the Extracellular side of the membrane; that stretch reads ASTGERRSGAGSTFKVKFSDFQAYN. A helical membrane pass occupies residues 49 to 69; sequence YLIALNVILFVYSTVQLVMLV. The Cytoplasmic portion of the chain corresponds to 70–80; the sequence is NSNHNSSFSSP. Residues 81–101 traverse the membrane as a helical segment; that stretch reads FKWVLGVYICDQLLAFLLFSA. Residues 102–137 are Extracellular-facing; it reads SSSAATASELSRHGLHNIWPPACATWKLWTFCSKAE. The chain crosses the membrane as a helical span at residues 138 to 158; sequence AAVAMSFLSSFFIITSSILSG. Residues 159–167 lie on the Cytoplasmic side of the membrane; that stretch reads YHLSKVPAV.

This sequence belongs to the Casparian strip membrane proteins (CASP) family. As to quaternary structure, homodimer and heterodimers.

It localises to the cell membrane. In Osmunda lancea (Fern), this protein is CASP-like protein 3.